The sequence spans 81 residues: Large ribosomal subunit protein bL31 (81 aa).

Belongs to the bacterial ribosomal protein bL31 family. Type A subfamily. In terms of assembly, part of the 50S ribosomal subunit.

In terms of biological role, binds the 23S rRNA. This chain is Large ribosomal subunit protein bL31, found in Synechocystis sp. (strain ATCC 27184 / PCC 6803 / Kazusa).